The primary structure comprises 254 residues: 5'-nucleotidase SurE (254 aa).

Residues Asp8, Asp9, Ser40, and Asn93 each coordinate a divalent metal cation.

Belongs to the SurE nucleotidase family. It depends on a divalent metal cation as a cofactor.

It is found in the cytoplasm. It carries out the reaction a ribonucleoside 5'-phosphate + H2O = a ribonucleoside + phosphate. Nucleotidase that shows phosphatase activity on nucleoside 5'-monophosphates. This chain is 5'-nucleotidase SurE, found in Rhizorhabdus wittichii (strain DSM 6014 / CCUG 31198 / JCM 15750 / NBRC 105917 / EY 4224 / RW1) (Sphingomonas wittichii).